A 285-amino-acid polypeptide reads, in one-letter code: MSSLSDQLSSFKKKVANQPIYAKPQPRQPASPTPTAYLNSNDGHSSAASSPGSYSLKKKRSKTSLVYSQPADSGVGTHYLSQLHYAVEYLKERNEPKTAEEIASYLSTPLTPMLLNLLKKNNRIYYDERNETFTFKPLHNIRSGAGLLAYLDSQKTHVGMSIKELRDGWPNVTVELEELEKQGEVLLLRTRKDGVPKMVWRNDKSCDCHVDKEFQQVWHEIPIPPTLDLASELGKYGLKPTSVDPSTVKRAGHNQTPKQKKPKTRRGKITNTHLNILRDYSSMKP.

Polar residues-rich tracts occupy residues 1 to 10 (MSSLSDQLSS) and 33 to 44 (TPTAYLNSNDGH). A disordered region spans residues 1 to 56 (MSSLSDQLSSFKKKVANQPIYAKPQPRQPASPTPTAYLNSNDGHSSAASSPGSYSL). Low complexity predominate over residues 45-55 (SSAASSPGSYS). A DNA-binding region (TFIIE beta) is located at residues 67 to 142 (YSQPADSGVG…FTFKPLHNIR (76 aa)). The interval 240 to 272 (PTSVDPSTVKRAGHNQTPKQKKPKTRRGKITNT) is disordered. Residues 258–268 (KQKKPKTRRGK) show a composition bias toward basic residues.

This sequence belongs to the TFIIE beta subunit family. As to quaternary structure, TFIIE is a tetramer of two alpha (tfa1) and two beta (tfa2) subunits. TFIIE associates with RNA polymerase II via the beta subunit.

The protein resides in the nucleus. In terms of biological role, recruits TFIIH to the initiation complex and stimulates the RNA polymerase II C-terminal domain kinase and DNA-dependent ATPase activities of TFIIH. Both TFIIH and TFIIE are required for promoter clearance by RNA polymerase. This is Transcription initiation factor IIE subunit beta (tfa2) from Schizosaccharomyces pombe (strain 972 / ATCC 24843) (Fission yeast).